Reading from the N-terminus, the 443-residue chain is Flavastacin (443 aa).

The signal sequence occupies residues 1 to 15 (MTRKLLILSGCLILA). Residues 16–91 (LNSCKSDMET…ANPDISTVER (76 aa)) constitute a propeptide, activation peptide. Residues 92 to 289 (STIVSSFIKT…AGINHLYGPV (198 aa)) enclose the Peptidase M12A domain. Histidine 189 contributes to the Zn(2+) binding site. Glutamate 190 is an active-site residue. Zn(2+) is bound by residues histidine 193 and histidine 199. Residues 297 to 440 (GTYTLTTSLA…PYTKQRFTLT (144 aa)) enclose the Ricin B-type lectin domain. An O-linked (Man...) serine glycan is attached at serine 355.

The cofactor is Zn(2+). O-linked glycan consists of the Man, GlcNAc, GlcU, Glc, GlcU, Rha, Man heptasaccharide.

It carries out the reaction Hydrolyzes polypeptides on the amino-side of Asp in -Xaa-|-Asp-. Acts very slowly on -Xaa-|-Glu.. In terms of biological role, zinc metallendopeptidase that cleaves preferentially on N-terminal side of aspartate-containing substrates. This is Flavastacin from Elizabethkingia meningoseptica (Chryseobacterium meningosepticum).